A 405-amino-acid polypeptide reads, in one-letter code: FAD-dependent monooxygenase thnD (405 aa).

FAD contacts are provided by E30, A45, R106, D308, and G321.

This sequence belongs to the paxM FAD-dependent monooxygenase family. It depends on FAD as a cofactor.

In terms of biological role, FAD-dependent monooxygenase; part of the gene cluster that produces the tetronate natural products trihazones. Transcription analysis of thnD confirmed this gene is expressed, hence its role in the biosynthetic pathway remains cryptic. The pathway begins with the formation of trihazone A by the hybrid PKS-NRPS synthetase thnA and the trans-enoyl reductase thnE. Trihazone A is further decarboxylated by the 2-oxoglutarate-dependent dioxygenase thnC to produce trihazone D. The function of the FAD-dependent monooxygenase thnD has still to be identified. The protein is FAD-dependent monooxygenase thnD of Trichoderma harzianum (Hypocrea lixii).